We begin with the raw amino-acid sequence, 562 residues long: Oxygen-dependent choline dehydrogenase (562 aa).

An FAD-binding site is contributed by 4-33; it reads DYIIIGAGSAGNVLATRLTEDPNTTVLLLE. The active-site Proton acceptor is His473.

Belongs to the GMC oxidoreductase family. It depends on FAD as a cofactor.

The enzyme catalyses choline + A = betaine aldehyde + AH2. It carries out the reaction betaine aldehyde + NAD(+) + H2O = glycine betaine + NADH + 2 H(+). It participates in amine and polyamine biosynthesis; betaine biosynthesis via choline pathway; betaine aldehyde from choline (cytochrome c reductase route): step 1/1. Its function is as follows. Involved in the biosynthesis of the osmoprotectant glycine betaine. Catalyzes the oxidation of choline to betaine aldehyde and betaine aldehyde to glycine betaine at the same rate. The sequence is that of Oxygen-dependent choline dehydrogenase from Escherichia coli (strain SMS-3-5 / SECEC).